A 334-amino-acid polypeptide reads, in one-letter code: Putative binding protein YtlA (334 aa).

A signal peptide spans 1-23 (MNRWLRLGFACVGSIFLMFALAA). The N-palmitoyl cysteine moiety is linked to residue cysteine 24. The S-diacylglycerol cysteine moiety is linked to residue cysteine 24.

It belongs to the bacterial solute-binding protein SsuA/TauA family.

It is found in the cell membrane. In Bacillus subtilis (strain 168), this protein is Putative binding protein YtlA (ytlA).